The sequence spans 481 residues: Glutamyl-tRNA(Gln) amidotransferase subunit A (481 aa).

Catalysis depends on charge relay system residues Lys-76 and Ser-151. The active-site Acyl-ester intermediate is the Ser-175.

The protein belongs to the amidase family. GatA subfamily. As to quaternary structure, heterotrimer of A, B and C subunits.

The enzyme catalyses L-glutamyl-tRNA(Gln) + L-glutamine + ATP + H2O = L-glutaminyl-tRNA(Gln) + L-glutamate + ADP + phosphate + H(+). In terms of biological role, allows the formation of correctly charged Gln-tRNA(Gln) through the transamidation of misacylated Glu-tRNA(Gln) in organisms which lack glutaminyl-tRNA synthetase. The reaction takes place in the presence of glutamine and ATP through an activated gamma-phospho-Glu-tRNA(Gln). This chain is Glutamyl-tRNA(Gln) amidotransferase subunit A, found in Neisseria meningitidis serogroup A / serotype 4A (strain DSM 15465 / Z2491).